The sequence spans 66 residues: Protein translocase subunit SecE (66 aa).

The helical transmembrane segment at 41–61 threads the bilayer; that stretch reads LAVMFIVGFVGFVIYILMEIL.

The protein belongs to the SecE/SEC61-gamma family. In terms of assembly, component of the Sec protein translocase complex. Heterotrimer consisting of SecY (alpha), SecG (beta) and SecE (gamma) subunits. The heterotrimers can form oligomers, although 1 heterotrimer is thought to be able to translocate proteins. Interacts with the ribosome. May interact with SecDF, and other proteins may be involved.

It is found in the cell membrane. Its function is as follows. Essential subunit of the Sec protein translocation channel SecYEG. Clamps together the 2 halves of SecY. May contact the channel plug during translocation. The sequence is that of Protein translocase subunit SecE from Archaeoglobus fulgidus (strain ATCC 49558 / DSM 4304 / JCM 9628 / NBRC 100126 / VC-16).